Reading from the N-terminus, the 488-residue chain is Erythromycin resistance ATP-binding protein MsrA (488 aa).

Residues 6-199 (IKFNQINHKL…NQYEQEQLEQ (194 aa)) enclose the ABC transporter 1 domain. 38-45 (GGNGTGKT) is a binding site for ATP. The Q-linker, rich in Glu and hydrophilic AA stretch occupies residues 200–298 (QRKYEQYISE…KIYDIHNNYP (99 aa)). The tract at residues 211 to 255 (QRLSQASKAKRNQAQQMAQASSKQKNKSIAPDRLSASKEKGTVEK) is disordered. The span at 222 to 233 (NQAQQMAQASSK) shows a compositional bias: low complexity. Residues 245-255 (SASKEKGTVEK) are compositionally biased toward basic and acidic residues. Residues 299–487 (IIAQNLTLVK…ELTGQSIHDI (189 aa)) form the ABC transporter 2 domain. An ATP-binding site is contributed by 331-338 (GANGVGKT).

It belongs to the ABC transporter superfamily.

Functionally, confers resistance to 14-membered ring macrolides (like erythromycin) and to B streptogramins, by acting as an ATP-dependent efflux pump. The sequence is that of Erythromycin resistance ATP-binding protein MsrA (msrA) from Staphylococcus epidermidis.